Reading from the N-terminus, the 472-residue chain is Excisase A (472 aa).

Positions 244 to 429 constitute a Tyr recombinase domain; it reads EILSGITKFE…FSLDMRKLAI (186 aa). Active-site residues include R287, K317, R384, and H407. Y416 (O-(3'-phospho-DNA)-tyrosine intermediate) is an active-site residue.

Belongs to the XisA/XisC recombinase family.

Its function is as follows. Essential for DNA excision. Site specific recombinase necessary for the excision of the 11 kb nifD element during heterocyst differentiation. The chain is Excisase A (xisA) from Nostoc sp. (strain PCC 7120 / SAG 25.82 / UTEX 2576).